Here is a 345-residue protein sequence, read N- to C-terminus: Anthranilate phosphoribosyltransferase (345 aa).

Residues glycine 80, glycine 83–aspartate 84, threonine 88, asparagine 90–threonine 93, lysine 108–serine 116, and serine 120 each bind 5-phospho-alpha-D-ribose 1-diphosphate. Residue glycine 80 participates in anthranilate binding. Residue serine 92 participates in Mg(2+) binding. Asparagine 111 provides a ligand contact to anthranilate. Residue arginine 166 coordinates anthranilate. Mg(2+) is bound by residues aspartate 225 and glutamate 226.

Belongs to the anthranilate phosphoribosyltransferase family. Homodimer. Mg(2+) is required as a cofactor.

It catalyses the reaction N-(5-phospho-beta-D-ribosyl)anthranilate + diphosphate = 5-phospho-alpha-D-ribose 1-diphosphate + anthranilate. Its pathway is amino-acid biosynthesis; L-tryptophan biosynthesis; L-tryptophan from chorismate: step 2/5. Catalyzes the transfer of the phosphoribosyl group of 5-phosphorylribose-1-pyrophosphate (PRPP) to anthranilate to yield N-(5'-phosphoribosyl)-anthranilate (PRA). The protein is Anthranilate phosphoribosyltransferase of Pelotomaculum thermopropionicum (strain DSM 13744 / JCM 10971 / SI).